The primary structure comprises 183 residues: Adenine phosphoribosyltransferase (183 aa).

Belongs to the purine/pyrimidine phosphoribosyltransferase family. In terms of assembly, homodimer.

The protein localises to the cytoplasm. The enzyme catalyses AMP + diphosphate = 5-phospho-alpha-D-ribose 1-diphosphate + adenine. The protein operates within purine metabolism; AMP biosynthesis via salvage pathway; AMP from adenine: step 1/1. Its function is as follows. Catalyzes a salvage reaction resulting in the formation of AMP, that is energically less costly than de novo synthesis. This chain is Adenine phosphoribosyltransferase, found in Cronobacter sakazakii (strain ATCC BAA-894) (Enterobacter sakazakii).